Here is a 133-residue protein sequence, read N- to C-terminus: Fluoride-specific ion channel FluC (133 aa).

Transmembrane regions (helical) follow at residues 3–23, 41–61, 76–96, and 103–123; these read AVVW…GSGL, WGTL…LIWV, IVGL…CLVF, and LIVG…VFLG. Na(+) is bound by residues Gly81 and Thr84.

Belongs to the fluoride channel Fluc/FEX (TC 1.A.43) family.

The protein resides in the cell inner membrane. The enzyme catalyses fluoride(in) = fluoride(out). Na(+) is not transported, but it plays an essential structural role and its presence is essential for fluoride channel function. Functionally, fluoride-specific ion channel. Important for reducing fluoride concentration in the cell, thus reducing its toxicity. This is Fluoride-specific ion channel FluC from Xylella fastidiosa (strain M23).